We begin with the raw amino-acid sequence, 440 residues long: Adenylosuccinate lyase (440 aa).

Residues 4 to 5 (RY), 67 to 69 (KHD), and 93 to 94 (TS) contribute to the N(6)-(1,2-dicarboxyethyl)-AMP site. The Proton donor/acceptor role is filled by His141. N(6)-(1,2-dicarboxyethyl)-AMP is bound at residue Gln212. The active-site Proton donor/acceptor is Ser262. N(6)-(1,2-dicarboxyethyl)-AMP is bound by residues Ser263, 268–270 (KRN), Asn276, and 307–311 (SVERF).

This sequence belongs to the lyase 1 family. Adenylosuccinate lyase subfamily. Homotetramer. Residues from neighboring subunits contribute catalytic and substrate-binding residues to each active site.

The catalysed reaction is N(6)-(1,2-dicarboxyethyl)-AMP = fumarate + AMP. It catalyses the reaction (2S)-2-[5-amino-1-(5-phospho-beta-D-ribosyl)imidazole-4-carboxamido]succinate = 5-amino-1-(5-phospho-beta-D-ribosyl)imidazole-4-carboxamide + fumarate. It functions in the pathway purine metabolism; AMP biosynthesis via de novo pathway; AMP from IMP: step 2/2. The protein operates within purine metabolism; IMP biosynthesis via de novo pathway; 5-amino-1-(5-phospho-D-ribosyl)imidazole-4-carboxamide from 5-amino-1-(5-phospho-D-ribosyl)imidazole-4-carboxylate: step 2/2. Functionally, catalyzes two reactions in de novo purine nucleotide biosynthesis. Catalyzes the breakdown of 5-aminoimidazole- (N-succinylocarboxamide) ribotide (SAICAR or 2-[5-amino-1-(5-phospho-beta-D-ribosyl)imidazole-4-carboxamido]succinate) to 5-aminoimidazole-4-carboxamide ribotide (AICAR or 5-amino-1-(5-phospho-beta-D-ribosyl)imidazole-4-carboxamide) and fumarate, and of adenylosuccinate (ADS or N(6)-(1,2-dicarboxyethyl)-AMP) to adenosine monophosphate (AMP) and fumarate. The polypeptide is Adenylosuccinate lyase (purB) (Helicobacter pylori (strain ATCC 700392 / 26695) (Campylobacter pylori)).